A 109-amino-acid chain; its full sequence is Aquaporin-2 (109 aa).

Topologically, residues 1–6 are cytoplasmic; it reads SVAFSR. The helical transmembrane segment at 7 to 27 threads the bilayer; sequence AVFAEFLATLLFVFFGLGSAL. Residues 28–35 lie on the Extracellular side of the membrane; sequence NWPQALPS. The helical transmembrane segment at 36 to 54 threads the bilayer; that stretch reads VLQIAMAFGLGIGTLVQAL. Residues 55–59 are Cytoplasmic-facing; sequence GHVSG. The discontinuously helical intramembrane region spans 60–69; that stretch reads AHINPAVTVA. Residues 63-65 carry the NPA 1 motif; the sequence is NPA. Residues 70-80 lie on the Cytoplasmic side of the membrane; the sequence is CLVGCHVSFLR. A helical transmembrane segment spans residues 81-102; the sequence is AAFYVAAQLLGAVAGAALLHEI. The Extracellular portion of the chain corresponds to 103–109; it reads TPPHVRG.

The protein belongs to the MIP/aquaporin (TC 1.A.8) family. In terms of assembly, homotetramer. In terms of processing, serine phosphorylation is necessary and sufficient for expression at the apical membrane. Endocytosis is not phosphorylation-dependent. N-glycosylated.

It is found in the apical cell membrane. It localises to the basolateral cell membrane. Its subcellular location is the cell membrane. The protein resides in the cytoplasmic vesicle membrane. The protein localises to the golgi apparatus. It is found in the trans-Golgi network membrane. The catalysed reaction is H2O(in) = H2O(out). It carries out the reaction glycerol(in) = glycerol(out). Its function is as follows. Forms a water-specific channel that provides the plasma membranes of renal collecting duct with high permeability to water, thereby permitting water to move in the direction of an osmotic gradient. Plays an essential role in renal water homeostasis. Could also be permeable to glycerol. The protein is Aquaporin-2 of Canis lupus familiaris (Dog).